The chain runs to 144 residues: 3-hydroxyacyl-[acyl-carrier-protein] dehydratase FabZ (144 aa).

Residue histidine 51 is part of the active site.

Belongs to the thioester dehydratase family. FabZ subfamily.

The protein localises to the cytoplasm. It carries out the reaction a (3R)-hydroxyacyl-[ACP] = a (2E)-enoyl-[ACP] + H2O. Functionally, involved in unsaturated fatty acids biosynthesis. Catalyzes the dehydration of short chain beta-hydroxyacyl-ACPs and long chain saturated and unsaturated beta-hydroxyacyl-ACPs. This is 3-hydroxyacyl-[acyl-carrier-protein] dehydratase FabZ from Clostridium botulinum (strain Langeland / NCTC 10281 / Type F).